The chain runs to 483 residues: ATP synthase subunit beta (483 aa).

162 to 169 contributes to the ATP binding site; that stretch reads GGAGVGKT.

Belongs to the ATPase alpha/beta chains family. F-type ATPases have 2 components, CF(1) - the catalytic core - and CF(0) - the membrane proton channel. CF(1) has five subunits: alpha(3), beta(3), gamma(1), delta(1), epsilon(1). CF(0) has four main subunits: a(1), b(1), b'(1) and c(9-12).

The protein localises to the cellular thylakoid membrane. It catalyses the reaction ATP + H2O + 4 H(+)(in) = ADP + phosphate + 5 H(+)(out). Functionally, produces ATP from ADP in the presence of a proton gradient across the membrane. The catalytic sites are hosted primarily by the beta subunits. In Prochloron didemni, this protein is ATP synthase subunit beta.